A 679-amino-acid chain; its full sequence is Protein SQS1 (679 aa).

4 disordered regions span residues 1 to 40, 76 to 161, 242 to 315, and 391 to 419; these read MAKR…RNNS, DSMR…PEPK, VSEE…PGFG, and PEEP…QDDE. Basic residues predominate over residues 16 to 32; sequence RGRRGGRAGHRGRGGRR. Positions 146–156 are enriched in acidic residues; that stretch reads GDDEPEGEYEP. Residues 406-419 are compositionally biased toward acidic residues; that stretch reads ENYDDSEEDEQDDE. Residues 514–576 enclose the R3H domain; sequence GFHIENIIDE…HTRVLVQKGG (63 aa). A G-patch domain is found at 633–679; it reads QDNVGRRLLEKLGWTHGEGLGVHGNKGISEPLMARVKKNRSGLRYTE.

It belongs to the SQS1 family.

The protein localises to the cytoplasm. The protein resides in the nucleus. Its function is as follows. May be involved in splicing. The sequence is that of Protein SQS1 (SQS1) from Eremothecium gossypii (strain ATCC 10895 / CBS 109.51 / FGSC 9923 / NRRL Y-1056) (Yeast).